A 190-amino-acid polypeptide reads, in one-letter code: dCTP deaminase, dUMP-forming (190 aa).

DCTP is bound by residues 101–106 (KSSLGR), Asp119, 127–129 (TLE), Gln148, Tyr162, and Gln174. Glu129 serves as the catalytic Proton donor/acceptor. The disordered stretch occupies residues 162–190 (YGSASAGSKYQGQRGPTPSRSYENFIKNT). Over residues 166 to 190 (SAGSKYQGQRGPTPSRSYENFIKNT) the composition is skewed to polar residues.

It belongs to the dCTP deaminase family. In terms of assembly, homotrimer.

The enzyme catalyses dCTP + 2 H2O = dUMP + NH4(+) + diphosphate. Its pathway is pyrimidine metabolism; dUMP biosynthesis; dUMP from dCTP: step 1/1. Functionally, bifunctional enzyme that catalyzes both the deamination of dCTP to dUTP and the hydrolysis of dUTP to dUMP without releasing the toxic dUTP intermediate. The chain is dCTP deaminase, dUMP-forming from Mycobacterium leprae (strain Br4923).